Here is an 873-residue protein sequence, read N- to C-terminus: DNA mismatch repair protein PMS1 (873 aa).

A DNA- and ATP-binding region spans residues 1–357 (MTQIHQINDI…FKTTLSDYYN (357 aa)). Over residues 379–402 (LKTEVFDDRSTTHESDNENYHTAR) the composition is skewed to basic and acidic residues. The tract at residues 379–423 (LKTEVFDDRSTTHESDNENYHTARSESNQSNHAHFNSTTGVIDKS) is disordered. The residue at position 393 (S393) is a Phosphoserine. The segment covering 403 to 423 (SESNQSNHAHFNSTTGVIDKS) has biased composition (polar residues). Residue S566 is modified to Phosphoserine. Residues 661 to 873 (YLTLTVSKND…WSSFSKDYEI (213 aa)) are interaction with MLH1.

It belongs to the DNA mismatch repair MutL/HexB family. Heterodimer of MLH1 and PMS1, called MutLalpha, which is the major MMR MutL activity correcting base-base mismatches as well as IDLs. The heterodimer binds double strand DNA independently of a mismatch with positive cooperativity and has more than one DNA binding site. Forms a ternary complex with either the MSH2-MSH6 (MutSalpha) or the MSH2-MSH3 heterodimer (MutSbeta), which recognize and bind to mismatch DNA. Ternary complex formation is promoted by ATP binding.

Its subcellular location is the nucleus. In terms of biological role, required for DNA mismatch repair (MMR), correcting base-base mismatches and insertion-deletion loops (IDLs) resulting from DNA replication, DNA damage or from recombination events between non-identical sequences during meiosis. Component of the MutLalpha heterodimer that forms a ternary complex with the MutS heterodimers, which initially recognize the DNA mismatches. This complex is thought to be responsible for directing the downstream MMR events, including strand discrimination, excision, and resynthesis. Plays a major role in maintaining the genetic stability of simple sequence repeats and in the repair of heteroduplex sites present in meiotic recombination intermediates. The sequence is that of DNA mismatch repair protein PMS1 (PMS1) from Saccharomyces cerevisiae (strain ATCC 204508 / S288c) (Baker's yeast).